We begin with the raw amino-acid sequence, 238 residues long: Opacity protein opA66 (238 aa).

A1 is a signal peptide. 2 disordered regions span residues N88 to G109 and G162 to E183. A compositionally biased stretch (polar residues) spans P168–E183.

The protein belongs to the opacity porin family.

The protein localises to the cell outer membrane. In terms of biological role, implicated in a number of adherence functions. OPA proteins are implicated in pathogenesis and are subject to phase variation. The polypeptide is Opacity protein opA66 (Neisseria gonorrhoeae).